The chain runs to 810 residues: Phenylalanine--tRNA ligase beta subunit (810 aa).

Positions 39–150 (RTWANGVVVG…ENLPLGSDVR (112 aa)) constitute a tRNA-binding domain. The region spanning 411-495 (TWSRSIFLRL…RLYGYDNFCD (85 aa)) is the B5 domain. Mg(2+)-binding residues include Asp-473, Asp-479, Glu-482, and Glu-483. The FDX-ACB domain maps to 716 to 809 (STYPASDRDI…LVEKFGVNLR (94 aa)).

The protein belongs to the phenylalanyl-tRNA synthetase beta subunit family. Type 1 subfamily. In terms of assembly, tetramer of two alpha and two beta subunits. Mg(2+) is required as a cofactor.

The protein localises to the cytoplasm. The catalysed reaction is tRNA(Phe) + L-phenylalanine + ATP = L-phenylalanyl-tRNA(Phe) + AMP + diphosphate + H(+). This is Phenylalanine--tRNA ligase beta subunit from Trichormus variabilis (strain ATCC 29413 / PCC 7937) (Anabaena variabilis).